Here is a 161-residue protein sequence, read N- to C-terminus: uncharacterized protein (161 aa).

It to M.thermoautotrophicum MTH862.

This is an uncharacterized protein from Methanocaldococcus jannaschii (strain ATCC 43067 / DSM 2661 / JAL-1 / JCM 10045 / NBRC 100440) (Methanococcus jannaschii).